The following is a 492-amino-acid chain: Solute carrier family 2, facilitated glucose transporter member 1 (492 aa).

An N-acetylmethionine modification is found at Met1. Residues 1–11 (MDPSSKKVTGR) lie on the Cytoplasmic side of the membrane. The helical transmembrane segment at 12-33 (LMLAVGGAVLGSLQFGYNTGVI) threads the bilayer. The Extracellular segment spans residues 34–66 (NAPQKVIEEFYNQTWNHRYGEPIPSTTLTTLWS). N-linked (GlcNAc...) asparagine glycosylation is present at Asn45. Residues 67–87 (LSVAIFSVGGMIGSFSVGLFV) form a helical membrane-spanning segment. The Cytoplasmic portion of the chain corresponds to 88–90 (NRF). Residues 91–112 (GRRNSMLMMNLLAFVAAVLMGF) form a helical membrane-spanning segment. The Extracellular segment spans residues 113 to 120 (SKLGKSFE). A helical membrane pass occupies residues 121 to 144 (MLILGRFIIGVYCGLTTGFVPMYV). Topologically, residues 145–155 (GEVSPTALRGA) are cytoplasmic. Residues 156-176 (LGTLHQLGIVVGILIAQVFGL) form a helical membrane-spanning segment. Gln161 contributes to the D-glucose binding site. The Extracellular segment spans residues 177–185 (DSIMGNADL). The chain crosses the membrane as a helical span at residues 186–206 (WPLLLSVIFIPALLQCILLPF). The Cytoplasmic segment spans residues 207 to 271 (CPESPRFLLI…LFRSPAYRQP (65 aa)). Ser226 is modified (phosphoserine). Residues 272–293 (ILIAVVLQLSQQLSGINAVFYY) form a helical membrane-spanning segment. D-glucose-binding positions include 282–283 (QQ) and Asn288. The Extracellular portion of the chain corresponds to 294–306 (STSIFEKAGVQQP). The helical transmembrane segment at 307–328 (VYATIGSGIVNTAFTVVSLFVV) threads the bilayer. Position 317 (Asn317) interacts with D-glucose. Residues 329–334 (ERAGRR) are Cytoplasmic-facing. Residues 335–355 (TLHLIGLAGMAGCAVLMTIAL) form a helical membrane-spanning segment. Residues 356 to 365 (ALLERLPWMS) lie on the Extracellular side of the membrane. A helical transmembrane segment spans residues 366 to 388 (YLSIVAIFGFVAFFEVGPGPIPW). D-glucose contacts are provided by Glu380 and Trp388. The Cytoplasmic segment spans residues 389 to 401 (FIVAELFSQGPRP). The helical transmembrane segment at 402 to 422 (AAIAVAGFSNWTSNFIVGMCF) threads the bilayer. The Extracellular portion of the chain corresponds to 423–429 (QYVEQLC). The chain crosses the membrane as a helical span at residues 430 to 450 (GPYVFIIFTVLLVLFFIFTYF). Residues 451–492 (KVPETKGRTFDEIASGFRQGGASQSDKTPEELFHPLGADSQV) are Cytoplasmic-facing. Position 465 is a phosphoserine (Ser465). Residues 468–492 (RQGGASQSDKTPEELFHPLGADSQV) are disordered. Residue Thr478 is modified to Phosphothreonine. A Phosphoserine modification is found at Ser490.

This sequence belongs to the major facilitator superfamily. Sugar transporter (TC 2.A.1.1) family. Glucose transporter subfamily. As to quaternary structure, found in a complex with ADD2, DMTN and SLC2A1. Interacts (via C-terminus cytoplasmic region) with DMTN isoform 2. Interacts with SNX27; the interaction is required when endocytosed to prevent degradation in lysosomes and promote recycling to the plasma membrane. Interacts with GIPC (via PDZ domain). Interacts with STOM. Interacts with SGTA (via Gln-rich region). Interacts with isoform 1 of BSG. Interacts with SMIM43; the interaction may promote SLC2A1-mediated glucose transport to meet the energy needs of mesendoderm differentiation. Phosphorylation at Ser-226 by PKC promotes glucose uptake by increasing cell membrane localization. As to expression, retina (at protein level).

The protein localises to the cell membrane. Its subcellular location is the photoreceptor inner segment. The catalysed reaction is D-glucose(out) = D-glucose(in). With respect to regulation, the uptake of glucose is inhibited by cytochalasin B. Glucose uptake is increased in response to phorbol ester 12-O-tetradecanoylphorbol-13-acetate (TPA) treatment: TPA-induced glucose uptake requires phosphorylation at Ser-226. In terms of biological role, facilitative glucose transporter, which is responsible for constitutive or basal glucose uptake. Has a very broad substrate specificity; can transport a wide range of aldoses including both pentoses and hexoses. Most important energy carrier of the brain: present at the blood-brain barrier and assures the energy-independent, facilitative transport of glucose into the brain. In association with BSG and NXNL1, promotes retinal cone survival by increasing glucose uptake into photoreceptors. Required for mesendoderm differentiation. The polypeptide is Solute carrier family 2, facilitated glucose transporter member 1 (Mus musculus (Mouse)).